The following is a 279-amino-acid chain: Urease accessory protein UreD (279 aa).

This sequence belongs to the UreD family. UreD, UreF and UreG form a complex that acts as a GTP-hydrolysis-dependent molecular chaperone, activating the urease apoprotein by helping to assemble the nickel containing metallocenter of UreC. The UreE protein probably delivers the nickel.

It is found in the cytoplasm. In terms of biological role, required for maturation of urease via the functional incorporation of the urease nickel metallocenter. The sequence is that of Urease accessory protein UreD from Trichormus variabilis (strain ATCC 29413 / PCC 7937) (Anabaena variabilis).